A 701-amino-acid polypeptide reads, in one-letter code: Capsid protein VP1 (701 aa).

This sequence belongs to the caliciviridae capsid protein family. Homodimer. Homomultimer. Interacts with the minor capsid protein VP2. May bind to VP3 and Vpg proteins. In terms of processing, cleaved by the viral protease to produce mature capsid protein.

The protein resides in the virion. It localises to the host cytoplasm. Functionally, capsid protein self assembles to form an icosahedral capsid with a T=3 symmetry, about 38 nm in diameter, and consisting of 180 capsid proteins. A smaller form of capsid with a diameter of 23 nm might be capsid proteins assembled as icosahedron with T=1 symmetry. The capsid encapsulates the genomic RNA and is decorated with VP2 proteins. This chain is Capsid protein VP1, found in Vesicular exanthema of swine virus serotype A48 (isolate Swine/United States/A48/1948) (VESV).